The chain runs to 312 residues: tRNA U34 carboxymethyltransferase (312 aa).

Residues lysine 88, tryptophan 102, lysine 107, glycine 127, 149–151, 177–178, methionine 191, tyrosine 195, and arginine 304 each bind carboxy-S-adenosyl-L-methionine; these read DPS and LD.

It belongs to the class I-like SAM-binding methyltransferase superfamily. CmoB family. As to quaternary structure, homotetramer.

The catalysed reaction is carboxy-S-adenosyl-L-methionine + 5-hydroxyuridine(34) in tRNA = 5-carboxymethoxyuridine(34) in tRNA + S-adenosyl-L-homocysteine + H(+). Its function is as follows. Catalyzes carboxymethyl transfer from carboxy-S-adenosyl-L-methionine (Cx-SAM) to 5-hydroxyuridine (ho5U) to form 5-carboxymethoxyuridine (cmo5U) at position 34 in tRNAs. The chain is tRNA U34 carboxymethyltransferase from Dichelobacter nodosus (strain VCS1703A).